A 270-amino-acid polypeptide reads, in one-letter code: Probable feruloyl esterase C (270 aa).

An N-terminal signal peptide occupies residues 1 to 21 (MIKSIILQAIMVLSTLTSVHG). An N-linked (GlcNAc...) asparagine glycan is attached at asparagine 23.

Belongs to the faeC family.

Its subcellular location is the secreted. It carries out the reaction feruloyl-polysaccharide + H2O = ferulate + polysaccharide.. Involved in degradation of plant cell walls. Hydrolyzes the feruloyl-arabinose ester bond in arabinoxylans, and the feruloyl-galactose ester bond in pectin. Active against paranitrophenyl-acetate, methyl ferulate and wheat arabinoxylan. In Aspergillus flavus (strain ATCC 200026 / FGSC A1120 / IAM 13836 / NRRL 3357 / JCM 12722 / SRRC 167), this protein is Probable feruloyl esterase C (faeC).